We begin with the raw amino-acid sequence, 762 residues long: Probable inorganic carbon transporter subunit DabA (762 aa).

Residues C279, D281, H461, and C476 each coordinate Zn(2+).

The protein belongs to the inorganic carbon transporter (TC 9.A.2) DabA family. As to quaternary structure, forms a complex with DabB. It depends on Zn(2+) as a cofactor.

The protein localises to the cell inner membrane. Part of an energy-coupled inorganic carbon pump. This is Probable inorganic carbon transporter subunit DabA from Legionella pneumophila (strain Lens).